The chain runs to 1448 residues: Glutamate receptor ionotropic, NMDA 2B (1448 aa).

Residues 1–24 (MRPTEACCYLKISLIILFYMGCYA) form the signal peptide. At 25 to 554 (QKHPNMDIAV…SAFLEPFSAD (530 aa)) the chain is on the extracellular side. Cys81 and Cys316 form a disulfide bridge. The Zn(2+) site is built by His122 and Glu279. Asn336 carries N-linked (GlcNAc...) asparagine glycosylation. Cystine bridges form between Cys426–Cys453 and Cys433–Cys454. 2 residues coordinate L-glutamate: Thr511 and Arg516. The helical transmembrane segment at 555 to 573 (VWVMMFVMLLIVSAVAVFV) threads the bilayer. At 574-600 (FEYFSPVGYNRCLADGREPGGPSFTIG) the chain is on the cytoplasmic side. The segment at residues 601 to 620 (KAIWLLWGLVFNNSVPVQNP) is an intramembrane region (discontinuously helical). Residues 601–620 (KAIWLLWGLVFNNSVPVQNP) are pore-forming. Topologically, residues 621–627 (KGTTSKI) are cytoplasmic. A helical transmembrane segment spans residues 628–643 (MVSVWAFFAVIFLASY). The Extracellular segment spans residues 644-819 (TANLAAFMIQ…LDIDNMAGVF (176 aa)). A glycan (N-linked (GlcNAc...) asparagine) is linked at Asn685. Residues 687 to 688 (ST) and Asp729 each bind L-glutamate. Cys743 and Cys798 are oxidised to a cystine. A helical transmembrane segment spans residues 820-839 (YMLAAAMALSLITFIMEHLF). Residues 840-1448 (FWQLRHCFMG…EKLSSIESDV (609 aa)) are Cytoplasmic-facing. Residues 1254–1265 (APNSKYPQSPNG) show a composition bias toward polar residues. Residues 1254–1277 (APNSKYPQSPNGKAQKRNRSKLHR) are disordered. A compositionally biased stretch (basic residues) spans 1267–1277 (AQKRNRSKLHR).

This sequence belongs to the glutamate-gated ion channel (TC 1.A.10.1) family. NR2B/GRIN2B subfamily. In terms of assembly, heterotetramer. Forms heterotetrameric channels composed of two GluN1/zeta subunits (GRIN1), and two identical GluN2/epsilon subunits (GRIN2A, GRIN2B, GRIN2C or GRIN2D) or GluN3 subunits (GRIN3A or GRIN3B) (in vitro). In vivo, the subunit composition may depend on the expression levels of the different subunits. In terms of tissue distribution, detected in oocytes.

It localises to the cell membrane. The protein localises to the postsynaptic cell membrane. The enzyme catalyses Ca(2+)(in) = Ca(2+)(out). The catalysed reaction is Na(+)(in) = Na(+)(out). It catalyses the reaction K(+)(in) = K(+)(out). Its function is as follows. Component of N-methyl-D-aspartate (NMDA) receptors (NMDARs) that function as heterotetrameric, ligand-gated cation channels with high calcium permeability and voltage-dependent block by Mg(2+). Channel activation requires binding of the neurotransmitter L-glutamate to the GluN2 subunit, glycine binding to the GluN1 subunit, plus membrane depolarization to eliminate channel inhibition by Mg(2+). NMDARs mediate simultaneously the potasium efflux and the influx of calcium and sodium. Each GluN2 subunit confers differential attributes to channel properties, including activation, deactivation and desensitization kinetics, pH sensitivity, Ca2(+) permeability, and binding to allosteric modulators. In Xenopus laevis (African clawed frog), this protein is Glutamate receptor ionotropic, NMDA 2B.